Consider the following 366-residue polypeptide: cAMP-dependent protein kinase regulatory subunit (366 aa).

The interval 1 to 121 is dimerization and phosphorylation; the sequence is MSGGNEEDQL…SLESAMRKNL (121 aa). The disordered stretch occupies residues 55-87; it reads QRAQEGGNPDAADDDDIIVEPPKRSGGRRTGIS. Residues 82 to 86 carry the Pseudophosphorylation motif motif; the sequence is RRTGI. Residue Ser87 is modified to Phosphoserine. 3',5'-cyclic AMP is bound by residues 122 to 239, Glu187, Arg196, 240 to 366, Glu311, and Arg320; these read LFAH…SKVQ and ILAD…KLMT.

This sequence belongs to the cAMP-dependent kinase regulatory chain family. Tetramer, composed of 2 regulatory (R) and 2 catalytic (C) subunits. In the presence of cAMP it dissociates into 2 active monomeric C subunits and an R dimer that binds four cAMP molecules. The pseudophosphorylation site binds to the substrate-binding region of the catalytic chain but is not phosphorylated. The physiological significance of phosphorylations by other kinases is unclear.

The protein resides in the cytoplasm. It is found in the cytosol. In terms of biological role, controls the rhythmic contraction of enteric muscles probably by regulating G-protein coupled receptor aex-2-mediated calcium influx in GABAergic DVB neurons. The chain is cAMP-dependent protein kinase regulatory subunit (kin-2) from Caenorhabditis elegans.